Reading from the N-terminus, the 127-residue chain is Protein KRTCAP2 homolog (127 aa).

The next 4 membrane-spanning stretches (helical) occupy residues 13-33, 41-61, 65-85, and 87-107; these read LISL…SNFF, ILGG…IGAI, VKLL…SSVH, and VSGT…NHAS.

Belongs to the KRTCAP2 family. Component of the oligosaccharyltransferase (OST) complex.

It localises to the membrane. In terms of biological role, subunit of the oligosaccharyl transferase (OST) complex that catalyzes the initial transfer of a defined glycan (Glc(3)Man(9)GlcNAc(2) in eukaryotes) from the lipid carrier dolichol-pyrophosphate to an asparagine residue within an Asn-X-Ser/Thr consensus motif in nascent polypeptide chains, the first step in protein N-glycosylation. N-glycosylation occurs cotranslationally and the complex associates with the Sec61 complex at the channel-forming translocon complex that mediates protein translocation across the endoplasmic reticulum (ER). All subunits are required for a maximal enzyme activity. The chain is Protein KRTCAP2 homolog from Dictyostelium discoideum (Social amoeba).